The primary structure comprises 662 residues: DNA topoisomerase 4 subunit B (662 aa).

ATP contacts are provided by residues Tyr20, Asn60, Asp87, 129 to 135, and Lys359; that span reads GLHGVGI. A Toprim domain is found at 439-553; it reads TELFIVEGDS…EGHLYLAKPP (115 aa). Glu445, Asp518, and Asp520 together coordinate Mg(2+).

The protein belongs to the type II topoisomerase family. ParE type 1 subfamily. In terms of assembly, heterotetramer composed of ParC and ParE. Mg(2+) is required as a cofactor. Mn(2+) serves as cofactor. Requires Ca(2+) as cofactor.

It catalyses the reaction ATP-dependent breakage, passage and rejoining of double-stranded DNA.. In terms of biological role, topoisomerase IV is essential for chromosome segregation. It relaxes supercoiled DNA. Performs the decatenation events required during the replication of a circular DNA molecule. In Rickettsia prowazekii (strain Madrid E), this protein is DNA topoisomerase 4 subunit B.